We begin with the raw amino-acid sequence, 278 residues long: Protein NIF3 homolog (278 aa).

The protein belongs to the GTP cyclohydrolase I type 2/NIF3 family.

The sequence is that of Protein NIF3 homolog from Schizosaccharomyces pombe (strain 972 / ATCC 24843) (Fission yeast).